The chain runs to 99 residues: DNA-binding protein Fis (99 aa).

The tract at residues 1–25 (MFEQKISSEALTTTTSIPATGQITQ) is disordered. A DNA-binding region (H-T-H motif) is located at residues 75–94 (QTRAATMLGINRGTLRKKLK).

This sequence belongs to the transcriptional regulatory Fis family. Homodimer.

In terms of biological role, activates ribosomal RNA transcription. Plays a direct role in upstream activation of rRNA promoters. In Psychromonas ingrahamii (strain DSM 17664 / CCUG 51855 / 37), this protein is DNA-binding protein Fis.